Reading from the N-terminus, the 487-residue chain is UDP-N-acetylmuramoyl-L-alanyl-D-glutamate--2,6-diaminopimelate ligase (487 aa).

UDP-N-acetyl-alpha-D-muramoyl-L-alanyl-D-glutamate is bound by residues Leu-23 and Ser-25. 108-114 (GTNGKTS) contributes to the ATP binding site. Residues 150 to 151 (TT), Ser-177, Gln-183, and Arg-185 contribute to the UDP-N-acetyl-alpha-D-muramoyl-L-alanyl-D-glutamate site. Lys-217 bears the N6-carboxylysine mark. Meso-2,6-diaminopimelate-binding positions include Arg-378, 402–405 (DNPR), Gly-453, and Glu-457. Positions 402–405 (DNPR) match the Meso-diaminopimelate recognition motif motif.

It belongs to the MurCDEF family. MurE subfamily. The cofactor is Mg(2+). In terms of processing, carboxylation is probably crucial for Mg(2+) binding and, consequently, for the gamma-phosphate positioning of ATP.

It localises to the cytoplasm. It catalyses the reaction UDP-N-acetyl-alpha-D-muramoyl-L-alanyl-D-glutamate + meso-2,6-diaminopimelate + ATP = UDP-N-acetyl-alpha-D-muramoyl-L-alanyl-gamma-D-glutamyl-meso-2,6-diaminopimelate + ADP + phosphate + H(+). It functions in the pathway cell wall biogenesis; peptidoglycan biosynthesis. In terms of biological role, catalyzes the addition of meso-diaminopimelic acid to the nucleotide precursor UDP-N-acetylmuramoyl-L-alanyl-D-glutamate (UMAG) in the biosynthesis of bacterial cell-wall peptidoglycan. This Pseudomonas syringae pv. tomato (strain ATCC BAA-871 / DC3000) protein is UDP-N-acetylmuramoyl-L-alanyl-D-glutamate--2,6-diaminopimelate ligase.